The primary structure comprises 115 residues: T cell receptor beta variable 7-7 (115 aa).

Positions 1 to 21 (MGTSLLCWVVLGFLGTDHTGA) are cleaved as a signal peptide. The region spanning 22 to 115 (GVSQSPRYKV…SAMYRCASSL (94 aa)) is the Ig-like domain. A disulfide bond links Cys-42 and Cys-111.

Alpha-beta TR is a heterodimer composed of an alpha and beta chain; disulfide-linked. The alpha-beta TR is associated with the transmembrane signaling CD3 coreceptor proteins to form the TR-CD3 (TcR or TCR). The assembly of alpha-beta TR heterodimers with CD3 occurs in the endoplasmic reticulum where a single alpha-beta TR heterodimer associates with one CD3D-CD3E heterodimer, one CD3G-CD3E heterodimer and one CD247 homodimer forming a stable octameric structure. CD3D-CD3E and CD3G-CD3E heterodimers preferentially associate with TR alpha and TR beta chains, respectively. The association of the CD247 homodimer is the last step of TcR assembly in the endoplasmic reticulum and is required for transport to the cell surface.

The protein localises to the cell membrane. Its function is as follows. V region of the variable domain of T cell receptor (TR) beta chain that participates in the antigen recognition. Alpha-beta T cell receptors are antigen specific receptors which are essential to the immune response and are present on the cell surface of T lymphocytes. Recognize peptide-major histocompatibility (MH) (pMH) complexes that are displayed by antigen presenting cells (APC), a prerequisite for efficient T cell adaptive immunity against pathogens. Binding of alpha-beta TR to pMH complex initiates TR-CD3 clustering on the cell surface and intracellular activation of LCK that phosphorylates the ITAM motifs of CD3G, CD3D, CD3E and CD247 enabling the recruitment of ZAP70. In turn ZAP70 phosphorylates LAT, which recruits numerous signaling molecules to form the LAT signalosome. The LAT signalosome propagates signal branching to three major signaling pathways, the calcium, the mitogen-activated protein kinase (MAPK) kinase and the nuclear factor NF-kappa-B (NF-kB) pathways, leading to the mobilization of transcription factors that are critical for gene expression and essential for T cell growth and differentiation. The T cell repertoire is generated in the thymus, by V-(D)-J rearrangement. This repertoire is then shaped by intrathymic selection events to generate a peripheral T cell pool of self-MH restricted, non-autoaggressive T cells. Post-thymic interaction of alpha-beta TR with the pMH complexes shapes TR structural and functional avidity. This is T cell receptor beta variable 7-7 from Homo sapiens (Human).